Reading from the N-terminus, the 246-residue chain is uncharacterized protein (246 aa).

Composition is skewed to basic residues over residues 1 to 10 (MVWRFQKHIG) and 79 to 97 (TRRR…KAGR). Positions 1–184 (MVWRFQKHIG…LPPAHVPPTL (184 aa)) are disordered. A compositionally biased stretch (pro residues) spans 158 to 180 (PPFPPPPPPGDPTPPSPLPPAHV).

This is an uncharacterized protein from Homo sapiens (Human).